The sequence spans 529 residues: Bifunctional purine biosynthesis protein PurH (529 aa).

The MGS-like domain occupies 1–148 (MQQRRPVRRA…KNHKDVAIVV (148 aa)). The residue at position 287 (Lys287) is an N6-acetyllysine.

This sequence belongs to the PurH family.

The catalysed reaction is (6R)-10-formyltetrahydrofolate + 5-amino-1-(5-phospho-beta-D-ribosyl)imidazole-4-carboxamide = 5-formamido-1-(5-phospho-D-ribosyl)imidazole-4-carboxamide + (6S)-5,6,7,8-tetrahydrofolate. It catalyses the reaction IMP + H2O = 5-formamido-1-(5-phospho-D-ribosyl)imidazole-4-carboxamide. Its pathway is purine metabolism; IMP biosynthesis via de novo pathway; 5-formamido-1-(5-phospho-D-ribosyl)imidazole-4-carboxamide from 5-amino-1-(5-phospho-D-ribosyl)imidazole-4-carboxamide (10-formyl THF route): step 1/1. It participates in purine metabolism; IMP biosynthesis via de novo pathway; IMP from 5-formamido-1-(5-phospho-D-ribosyl)imidazole-4-carboxamide: step 1/1. In Escherichia coli (strain SMS-3-5 / SECEC), this protein is Bifunctional purine biosynthesis protein PurH.